The sequence spans 286 residues: 33 kDa chaperonin (286 aa).

Disulfide bonds link Cys225–Cys227 and Cys258–Cys261.

It belongs to the HSP33 family. Post-translationally, under oxidizing conditions two disulfide bonds are formed involving the reactive cysteines. Under reducing conditions zinc is bound to the reactive cysteines and the protein is inactive.

It localises to the cytoplasm. In terms of biological role, redox regulated molecular chaperone. Protects both thermally unfolding and oxidatively damaged proteins from irreversible aggregation. Plays an important role in the bacterial defense system toward oxidative stress. This Shewanella putrefaciens (strain CN-32 / ATCC BAA-453) protein is 33 kDa chaperonin.